Here is a 249-residue protein sequence, read N- to C-terminus: Indole-3-glycerol phosphate synthase (249 aa).

It belongs to the TrpC family.

It carries out the reaction 1-(2-carboxyphenylamino)-1-deoxy-D-ribulose 5-phosphate + H(+) = (1S,2R)-1-C-(indol-3-yl)glycerol 3-phosphate + CO2 + H2O. The protein operates within amino-acid biosynthesis; L-tryptophan biosynthesis; L-tryptophan from chorismate: step 4/5. This chain is Indole-3-glycerol phosphate synthase, found in Pyrobaculum aerophilum (strain ATCC 51768 / DSM 7523 / JCM 9630 / CIP 104966 / NBRC 100827 / IM2).